The sequence spans 541 residues: MIVSIVDYGSGNVRSLINAVRYLGFETQWIRNPHDIEKAECLIFPGVGNFGFVCDSLAKQGFLEPLRRYALSGKPFMAVCVGIQALFEGSVEAPHSKGLGVFPGLVQRFDNDDKTVPHIGWNSCAVRSDTSKEFFGMRPHDKFYFVHSYMIPEKGLILPPEFKIATTKYGNETFVGAIVKNNFLATQFHPEKSGSAGLRCLKAFLTGNYEQPISGEASKLIENSFGGLTKRIIACLDVRSNDAGDLVVTKGDQYDVREKSSGSEVRNLGKPVELCQRYFQEGADEVVFLNITSFRNCPMADAPMLQVLEKAAQTVFVPLTVGGGIRDVSDPDGTFHPAVEVAGIYFRSGADKVSIGSDAVYAAEKYYENGKKLSGKTAIETISKAYGNQAVVISVDPKRQYVKVPEDTKHHVVKTSRLGPNGEAYCWYQCTVKGGREYRDIDVVELTRACEAMGAGEVLLNCMDQDGSNAGYDIELVRLVKNSVNIPVIASSGAGIPQHFEEVFKETDCDAALAAGIFHRQTCRIEDVKEYLAIHDVLVRT.

In terms of domain architecture, Glutamine amidotransferase type-1 spans 2 to 214 (IVSIVDYGSG…LTGNYEQPIS (213 aa)). Residues cysteine 80, histidine 189, and glutamate 191 each act as for GATase activity in the active site. The interval 228–541 (LTKRIIACLD…LAIHDVLVRT (314 aa)) is cyclase. Catalysis depends on residues aspartate 237 and aspartate 396.

In the C-terminal section; belongs to the HisA/HisF family.

It carries out the reaction 5-[(5-phospho-1-deoxy-D-ribulos-1-ylimino)methylamino]-1-(5-phospho-beta-D-ribosyl)imidazole-4-carboxamide + L-glutamine = D-erythro-1-(imidazol-4-yl)glycerol 3-phosphate + 5-amino-1-(5-phospho-beta-D-ribosyl)imidazole-4-carboxamide + L-glutamate + H(+). The catalysed reaction is L-glutamine + H2O = L-glutamate + NH4(+). It functions in the pathway amino-acid biosynthesis; L-histidine biosynthesis; L-histidine from 5-phospho-alpha-D-ribose 1-diphosphate: step 5/9. Functionally, IGPS catalyzes the conversion of PRFAR and glutamine to IGP, AICAR and glutamate. The glutaminase domain produces the ammonia necessary for the cyclase domain to produce IGP and AICAR from PRFAR. The ammonia is channeled to the active site of the cyclase domain. In Schizosaccharomyces pombe (strain 972 / ATCC 24843) (Fission yeast), this protein is Imidazole glycerol phosphate synthase hisHF (his4).